An 89-amino-acid chain; its full sequence is Small ribosomal subunit protein uS15 (89 aa).

A disordered region spans residues 1 to 23; that stretch reads MSLGTEEKQNLINTHQVHPTDTG. Over residues 10-23 the composition is skewed to polar residues; the sequence is NLINTHQVHPTDTG.

Belongs to the universal ribosomal protein uS15 family. In terms of assembly, part of the 30S ribosomal subunit. Forms a bridge to the 50S subunit in the 70S ribosome, contacting the 23S rRNA.

In terms of biological role, one of the primary rRNA binding proteins, it binds directly to 16S rRNA where it helps nucleate assembly of the platform of the 30S subunit by binding and bridging several RNA helices of the 16S rRNA. Its function is as follows. Forms an intersubunit bridge (bridge B4) with the 23S rRNA of the 50S subunit in the ribosome. This Prochlorococcus marinus (strain NATL2A) protein is Small ribosomal subunit protein uS15.